A 78-amino-acid chain; its full sequence is MTIKDELNRILWTRRDLENYSVLIVDRFKGLVEIPFPRIERVDNTYIYLDDDTVIPIHRVMEIRMKGQVIWSRTANRR.

The protein belongs to the UPF0248 family.

The sequence is that of UPF0248 protein Msed_0897 from Metallosphaera sedula (strain ATCC 51363 / DSM 5348 / JCM 9185 / NBRC 15509 / TH2).